Here is a 584-residue protein sequence, read N- to C-terminus: tRNA-guanine(15) transglycosylase (584 aa).

The active-site Nucleophile is Asp95. Substrate-binding residues include Asp130 and Gly196. Zn(2+) is bound by residues Cys279, Cys281, and Cys284. Positions 507 to 582 (RMRVVVSEEA…RAVKVRRGIS (76 aa)) constitute a PUA domain.

This sequence belongs to the archaeosine tRNA-ribosyltransferase family. It depends on Zn(2+) as a cofactor.

The catalysed reaction is guanosine(15) in tRNA + 7-cyano-7-deazaguanine = 7-cyano-7-carbaguanosine(15) in tRNA + guanine. The protein operates within tRNA modification; archaeosine-tRNA biosynthesis. Functionally, exchanges the guanine residue with 7-cyano-7-deazaguanine (preQ0) at position 15 in the dihydrouridine loop (D-loop) of archaeal tRNAs. The sequence is that of tRNA-guanine(15) transglycosylase from Pyrococcus abyssi (strain GE5 / Orsay).